Reading from the N-terminus, the 333-residue chain is Glycerol-3-phosphate dehydrogenase [NAD(P)+] (333 aa).

NADPH-binding residues include Ser10, Trp11, His31, Arg32, and Lys105. Residues Lys105, Gly136, and Ser138 each contribute to the sn-glycerol 3-phosphate site. Position 140 (Ala140) interacts with NADPH. Sn-glycerol 3-phosphate contacts are provided by Lys191, Asp244, Ser254, Arg255, and Asn256. Catalysis depends on Lys191, which acts as the Proton acceptor. Residue Arg255 participates in NADPH binding. Residues Val279 and Glu281 each contribute to the NADPH site.

Belongs to the NAD-dependent glycerol-3-phosphate dehydrogenase family.

It is found in the cytoplasm. The catalysed reaction is sn-glycerol 3-phosphate + NAD(+) = dihydroxyacetone phosphate + NADH + H(+). The enzyme catalyses sn-glycerol 3-phosphate + NADP(+) = dihydroxyacetone phosphate + NADPH + H(+). Its pathway is membrane lipid metabolism; glycerophospholipid metabolism. In terms of biological role, catalyzes the reduction of the glycolytic intermediate dihydroxyacetone phosphate (DHAP) to sn-glycerol 3-phosphate (G3P), the key precursor for phospholipid synthesis. The polypeptide is Glycerol-3-phosphate dehydrogenase [NAD(P)+] (Chlorobium limicola (strain DSM 245 / NBRC 103803 / 6330)).